The primary structure comprises 2430 residues: Spatacsin (2430 aa).

A phosphoserine mark is found at serine 1942 and serine 1943.

In terms of assembly, interacts with AP5Z1, AP5B1, AP5S1 and ZFYVE26. Ubiquitously expressed at low level. Expressed in embryonic and adult cortical projection neurons.

The protein resides in the cytoplasm. The protein localises to the cytosol. It localises to the nucleus. Its subcellular location is the cell projection. It is found in the axon. The protein resides in the dendrite. The protein localises to the synapse. In terms of biological role, may play a role in neurite plasticity by maintaining cytoskeleton stability and regulating synaptic vesicle transport. The protein is Spatacsin (Spg11) of Mus musculus (Mouse).